Consider the following 382-residue polypeptide: Bifunctional enzyme IspD/IspF (382 aa).

A 2-C-methyl-D-erythritol 4-phosphate cytidylyltransferase region spans residues 1 to 226 (MTLAVLIVAA…RSTMDNIPDI (226 aa)). The 2-C-methyl-D-erythritol 2,4-cyclodiphosphate synthase stretch occupies residues 227-382 (RLGNGYDVHR…ALATATLVRA (156 aa)). The a divalent metal cation site is built by Asp-233 and His-235. 4-CDP-2-C-methyl-D-erythritol 2-phosphate contacts are provided by residues 233 to 235 (DVH) and 259 to 260 (HS). Residue His-267 participates in a divalent metal cation binding. 4-CDP-2-C-methyl-D-erythritol 2-phosphate contacts are provided by residues 281–283 (DIG), 357–360 (TTSE), Phe-364, and Arg-367.

This sequence in the N-terminal section; belongs to the IspD/TarI cytidylyltransferase family. IspD subfamily. It in the C-terminal section; belongs to the IspF family. A divalent metal cation is required as a cofactor.

The catalysed reaction is 2-C-methyl-D-erythritol 4-phosphate + CTP + H(+) = 4-CDP-2-C-methyl-D-erythritol + diphosphate. It catalyses the reaction 4-CDP-2-C-methyl-D-erythritol 2-phosphate = 2-C-methyl-D-erythritol 2,4-cyclic diphosphate + CMP. The protein operates within isoprenoid biosynthesis; isopentenyl diphosphate biosynthesis via DXP pathway; isopentenyl diphosphate from 1-deoxy-D-xylulose 5-phosphate: step 2/6. It functions in the pathway isoprenoid biosynthesis; isopentenyl diphosphate biosynthesis via DXP pathway; isopentenyl diphosphate from 1-deoxy-D-xylulose 5-phosphate: step 4/6. Its function is as follows. Bifunctional enzyme that catalyzes the formation of 4-diphosphocytidyl-2-C-methyl-D-erythritol from CTP and 2-C-methyl-D-erythritol 4-phosphate (MEP) (IspD), and catalyzes the conversion of 4-diphosphocytidyl-2-C-methyl-D-erythritol 2-phosphate (CDP-ME2P) to 2-C-methyl-D-erythritol 2,4-cyclodiphosphate (ME-CPP) with a corresponding release of cytidine 5-monophosphate (CMP) (IspF). The polypeptide is Bifunctional enzyme IspD/IspF (Ruegeria sp. (strain TM1040) (Silicibacter sp.)).